Consider the following 126-residue polypeptide: Large ribosomal subunit protein bL12 (126 aa).

The protein belongs to the bacterial ribosomal protein bL12 family. As to quaternary structure, homodimer. Part of the ribosomal stalk of the 50S ribosomal subunit. Forms a multimeric L10(L12)X complex, where L10 forms an elongated spine to which 2 to 4 L12 dimers bind in a sequential fashion. Binds GTP-bound translation factors.

Forms part of the ribosomal stalk which helps the ribosome interact with GTP-bound translation factors. Is thus essential for accurate translation. The protein is Large ribosomal subunit protein bL12 of Bordetella petrii (strain ATCC BAA-461 / DSM 12804 / CCUG 43448).